The chain runs to 272 residues: Shikimate dehydrogenase (NADP(+)) (272 aa).

Shikimate contacts are provided by residues 14–16 (SKS) and Thr-61. The active-site Proton acceptor is Lys-65. Glu-77 provides a ligand contact to NADP(+). Shikimate contacts are provided by Asn-86 and Asp-102. NADP(+) is bound by residues 126-130 (GAGGA), 149-154 (NRTASR), and Met-213. Tyr-215 contacts shikimate. NADP(+) is bound at residue Gly-237.

Belongs to the shikimate dehydrogenase family. Homodimer.

It catalyses the reaction shikimate + NADP(+) = 3-dehydroshikimate + NADPH + H(+). It functions in the pathway metabolic intermediate biosynthesis; chorismate biosynthesis; chorismate from D-erythrose 4-phosphate and phosphoenolpyruvate: step 4/7. Functionally, involved in the biosynthesis of the chorismate, which leads to the biosynthesis of aromatic amino acids. Catalyzes the reversible NADPH linked reduction of 3-dehydroshikimate (DHSA) to yield shikimate (SA). The protein is Shikimate dehydrogenase (NADP(+)) of Salmonella schwarzengrund (strain CVM19633).